We begin with the raw amino-acid sequence, 339 residues long: Transcription initiation factor IIB (339 aa).

A TFIIB-type zinc finger spans residues 39–70 (EELICPVCGSKSIIKDYERAEIVCEMCGCVLQ). Cys43, Cys46, Cys62, and Cys65 together coordinate Zn(2+). 2 consecutive repeat copies span residues 156-239 (SELD…SREL) and 250-331 (DYVP…ELTE).

This sequence belongs to the TFIIB family.

Its function is as follows. Stabilizes TBP binding to an archaeal box-A promoter. Also responsible for recruiting RNA polymerase II to the pre-initiation complex (DNA-TBP-TFIIB). The sequence is that of Transcription initiation factor IIB from Methanococcus maripaludis (strain C5 / ATCC BAA-1333).